A 216-amino-acid chain; its full sequence is Sperm microtubule inner protein 8 (216 aa).

Microtubule inner protein component of sperm flagellar doublet microtubules. As to expression, expressed in testis, prostate and placenta.

It is found in the cytoplasm. The protein localises to the cytoskeleton. The protein resides in the flagellum axoneme. Its function is as follows. Microtubule inner protein (MIP) part of the dynein-decorated doublet microtubules (DMTs) in flagellum axoneme. May serve to reinforce and thus stabilize the microtubule structure in the sperm flagella. The sequence is that of Sperm microtubule inner protein 8 from Homo sapiens (Human).